A 407-amino-acid polypeptide reads, in one-letter code: Argininosuccinate synthase (407 aa).

10–18 (AYSGGLDTS) contributes to the ATP binding site. L-citrulline contacts are provided by Y88 and S93. G118 is an ATP binding site. L-aspartate is bound by residues T120, N124, and D125. N124 contacts L-citrulline. The L-citrulline site is built by R128, S177, S186, E263, and Y275.

This sequence belongs to the argininosuccinate synthase family. Type 1 subfamily. In terms of assembly, homotetramer.

The protein localises to the cytoplasm. The catalysed reaction is L-citrulline + L-aspartate + ATP = 2-(N(omega)-L-arginino)succinate + AMP + diphosphate + H(+). It functions in the pathway amino-acid biosynthesis; L-arginine biosynthesis; L-arginine from L-ornithine and carbamoyl phosphate: step 2/3. The protein is Argininosuccinate synthase of Clostridium botulinum (strain Alaska E43 / Type E3).